The sequence spans 560 residues: Alpha-keto-acid decarboxylase (560 aa).

Glu61 is a thiamine diphosphate binding site. Residues 396–478 are thiamine pyrophosphate binding; it reads TSFYGMADHR…VVVNNDGYTV (83 aa). Mg(2+) is bound by residues Asp446, Asn473, and Gly475.

Belongs to the TPP enzyme family. The cofactor is a metal cation. Requires thiamine diphosphate as cofactor.

Its function is as follows. Decarboxylates branched-chain and aromatic alpha-keto acids to aldehydes. The polypeptide is Alpha-keto-acid decarboxylase (kdc) (Mycobacterium tuberculosis (strain CDC 1551 / Oshkosh)).